Consider the following 84-residue polypeptide: Large ribosomal subunit protein bL31B (84 aa).

The protein belongs to the bacterial ribosomal protein bL31 family. Type B subfamily. Part of the 50S ribosomal subunit.

This is Large ribosomal subunit protein bL31B from Rhodococcus erythropolis (strain PR4 / NBRC 100887).